Here is a 187-residue protein sequence, read N- to C-terminus: Accessory gene regulator protein B (187 aa).

5 helical membrane passes run 49-69 (IAYILNIFIFTLITNISFYLI), 82-102 (FWCYIESITLFIVLPLLVLHF), 107-127 (TLMMFLALISVGVVIKYAPAA), 143-163 (YFSIIISTILFIITLFVKEPY), and 164-184 (TQFIQLGIIIQAITLLPIYYS).

Belongs to the AgrB family.

The protein localises to the cell membrane. Functionally, essential for the production of a quorum sensing system signal molecule, the autoinducing peptide (AIP). This quorum sensing system is responsible for the regulation of the expression of virulence factor genes. Involved in the proteolytic processing of AgrD, the precursor of AIP. This is Accessory gene regulator protein B from Staphylococcus aureus (strain MW2).